The sequence spans 291 residues: Beta-lactamase CTX-M-14 (291 aa).

Positions 1–28 (MVTKRVQRMMFAAAACIPLLLGSAPLYA) are cleaved as a signal peptide. Ser-73 serves as the catalytic Nucleophile; acyl-ester intermediate. A beta-lactam is bound by residues Lys-76, Ser-133, Glu-169, and Ser-240.

This sequence belongs to the class-A beta-lactamase family. As to quaternary structure, monomer.

It localises to the secreted. The enzyme catalyses a beta-lactam + H2O = a substituted beta-amino acid. Its activity is regulated as follows. Inhibited by the beta-lactamase-blocking agents clavulanic acid, tazobactam and sulbactam. Its function is as follows. Extended-spectrum beta-lactamase (ESBL) which confers resistance to penicillins, as well as first, second, and third-generation cephalosporins. Has cefotaxime-hydrolyzing activity. The protein is Beta-lactamase CTX-M-14 of Escherichia coli.